We begin with the raw amino-acid sequence, 104 residues long: NADH-quinone oxidoreductase subunit K (104 aa).

Transmembrane regions (helical) follow at residues 4-24 (VPASAYLTLAIILFCIGLFGA), 31-51 (VIVLVCIELMLNAVNLNLVAF), and 67-87 (LFTMAVAAAEAAVGLAILIAL).

This sequence belongs to the complex I subunit 4L family. As to quaternary structure, NDH-1 is composed of 14 different subunits. Subunits NuoA, H, J, K, L, M, N constitute the membrane sector of the complex.

The protein resides in the cell membrane. It carries out the reaction a quinone + NADH + 5 H(+)(in) = a quinol + NAD(+) + 4 H(+)(out). Its function is as follows. NDH-1 shuttles electrons from NADH, via FMN and iron-sulfur (Fe-S) centers, to quinones in the respiratory chain. The immediate electron acceptor for the enzyme in this species is believed to be a menaquinone. Couples the redox reaction to proton translocation (for every two electrons transferred, four hydrogen ions are translocated across the cytoplasmic membrane), and thus conserves the redox energy in a proton gradient. This Bacillus cereus (strain AH187) protein is NADH-quinone oxidoreductase subunit K.